Consider the following 26-residue polypeptide: Unknown protein 16 (26 aa).

Positions 1–26 (AINSESGVRSVVPQPCNALPNQGPEK) are disordered.

The protein is Unknown protein 16 of Pseudotsuga menziesii (Douglas-fir).